The chain runs to 141 residues: Endoribonuclease YbeY (141 aa).

Zn(2+)-binding residues include histidine 107, histidine 111, and histidine 117.

It belongs to the endoribonuclease YbeY family. Zn(2+) serves as cofactor.

It localises to the cytoplasm. In terms of biological role, single strand-specific metallo-endoribonuclease involved in late-stage 70S ribosome quality control and in maturation of the 3' terminus of the 16S rRNA. The protein is Endoribonuclease YbeY of Leptospira interrogans serogroup Icterohaemorrhagiae serovar Lai (strain 56601).